A 258-amino-acid chain; its full sequence is Ribonuclease PH (258 aa).

Residues Arg-86 and 124–126 each bind phosphate; that span reads GTR.

It belongs to the RNase PH family. In terms of assembly, homohexameric ring arranged as a trimer of dimers.

It carries out the reaction tRNA(n+1) + phosphate = tRNA(n) + a ribonucleoside 5'-diphosphate. Functionally, phosphorolytic 3'-5' exoribonuclease that plays an important role in tRNA 3'-end maturation. Removes nucleotide residues following the 3'-CCA terminus of tRNAs; can also add nucleotides to the ends of RNA molecules by using nucleoside diphosphates as substrates, but this may not be physiologically important. Probably plays a role in initiation of 16S rRNA degradation (leading to ribosome degradation) during starvation. The sequence is that of Ribonuclease PH from Caldicellulosiruptor saccharolyticus (strain ATCC 43494 / DSM 8903 / Tp8T 6331).